Here is a 354-residue protein sequence, read N- to C-terminus: WASH complex subunit 3 (354 aa).

A disordered region spans residues 76 to 354; it reads SSANVPVHNT…DDDDDDDESW (279 aa). Residues 107–143 show a composition bias toward pro residues; sequence IPPPPPPPPPPMTGVPPPPPPPPPPPISKSNIPPPPA. Residues 150–159 are compositionally biased toward acidic residues; sequence ESDDDDEDNN. The segment covering 213-244 has biased composition (pro residues); the sequence is PQPPQPQPQSPSPQPPPPPTTTSSIPVPPPPF. The span at 251–260 shows a compositional bias: acidic residues; sequence SDDDDDDDEG. Over residues 277-290 the composition is skewed to low complexity; sequence NNNSNSNSYSNNNN. Composition is skewed to acidic residues over residues 293-307 and 342-354; these read DDDD…DDDN and DADD…DESW.

This sequence belongs to the CCDC53 family. In terms of assembly, probable component of the WASH complex.

The polypeptide is WASH complex subunit 3 (Dictyostelium discoideum (Social amoeba)).